A 902-amino-acid polypeptide reads, in one-letter code: HTH-type transcriptional regulator MalT (902 aa).

Residue 39–46 (SPAGYGKT) coordinates ATP. In terms of domain architecture, HTH luxR-type spans 832-897 (ELVRTSPLTQ…EAVQTAEQLL (66 aa)). Residues 856 to 875 (NEQIAHELDVAGTTIKTHIR) constitute a DNA-binding region (H-T-H motif).

This sequence belongs to the MalT family. In terms of assembly, monomer in solution. Oligomerizes to an active state in the presence of the positive effectors ATP and maltotriose.

Activated by ATP and maltotriose, which are both required for DNA binding. Its function is as follows. Positively regulates the transcription of the maltose regulon whose gene products are responsible for uptake and catabolism of malto-oligosaccharides. Specifically binds to the promoter region of its target genes, recognizing a short DNA motif called the MalT box. This chain is HTH-type transcriptional regulator MalT, found in Vibrio cholerae serotype O1 (strain ATCC 39315 / El Tor Inaba N16961).